A 359-amino-acid chain; its full sequence is WAT1-related protein At5g64700 (359 aa).

10 helical membrane-spanning segments follow: residues 10–30 (LMVT…KAVF), 37–57 (FVFV…LAFF), 66–86 (LSFV…TLSL), 100–120 (LAAA…LLFG), 135–155 (LVGI…KGPL), 186–206 (WLKG…WLVL), 218–238 (LYFT…IAIA), 256–276 (AVIY…SWVI), 282–302 (VFLS…SAIL), and 306–326 (IISL…YCVL). EamA domains are found at residues 18-136 (IYTI…AKLV) and 198-326 (ILWG…YCVL).

It belongs to the drug/metabolite transporter (DMT) superfamily. Plant drug/metabolite exporter (P-DME) (TC 2.A.7.4) family.

It is found in the membrane. In Arabidopsis thaliana (Mouse-ear cress), this protein is WAT1-related protein At5g64700.